A 456-amino-acid polypeptide reads, in one-letter code: Exodeoxyribonuclease 7 large subunit (456 aa).

This sequence belongs to the XseA family. As to quaternary structure, heterooligomer composed of large and small subunits.

It localises to the cytoplasm. It carries out the reaction Exonucleolytic cleavage in either 5'- to 3'- or 3'- to 5'-direction to yield nucleoside 5'-phosphates.. In terms of biological role, bidirectionally degrades single-stranded DNA into large acid-insoluble oligonucleotides, which are then degraded further into small acid-soluble oligonucleotides. The sequence is that of Exodeoxyribonuclease 7 large subunit from Lactobacillus johnsonii (strain CNCM I-12250 / La1 / NCC 533).